Consider the following 533-residue polypeptide: 2-isopropylmalate synthase (533 aa).

A Pyruvate carboxyltransferase domain is found at 8–269; that stretch reads ILIFDTTLRD…YFNPFLGRPA (262 aa). Residues aspartate 17, histidine 208, histidine 210, and asparagine 244 each coordinate Mn(2+). Residues 408 to 533 are regulatory domain; that stretch reads RLERVQVSCG…REHPPVVASL (126 aa).

This sequence belongs to the alpha-IPM synthase/homocitrate synthase family. LeuA type 1 subfamily. In terms of assembly, homodimer. The cofactor is Mn(2+).

It is found in the cytoplasm. It catalyses the reaction 3-methyl-2-oxobutanoate + acetyl-CoA + H2O = (2S)-2-isopropylmalate + CoA + H(+). It participates in amino-acid biosynthesis; L-leucine biosynthesis; L-leucine from 3-methyl-2-oxobutanoate: step 1/4. Catalyzes the condensation of the acetyl group of acetyl-CoA with 3-methyl-2-oxobutanoate (2-ketoisovalerate) to form 3-carboxy-3-hydroxy-4-methylpentanoate (2-isopropylmalate). This Synechocystis sp. (strain ATCC 27184 / PCC 6803 / Kazusa) protein is 2-isopropylmalate synthase.